The following is a 493-amino-acid chain: N-acetylglucosamine kinase 1 (493 aa).

Positions 27–490 (ESSVLSSIVE…SIIGAAIGAA (464 aa)) constitute a Hexokinase domain. The interval 79–221 (TGDEHGQYLV…GLTLDVQSIL (143 aa)) is hexokinase small subdomain. A hexokinase large subdomain region spans residues 222-479 (NDSLAVYSAG…IKVDLKLIEN (258 aa)).

It belongs to the hexokinase family. As to quaternary structure, interacts with histone deacetylase SIR2 under filamentation-inducing conditions.

The protein localises to the cytoplasm. The protein resides in the nucleus. It is found in the mitochondrion. The enzyme catalyses N-acetyl-D-glucosamine + ATP = N-acetyl-D-glucosamine 6-phosphate + ADP + H(+). It carries out the reaction D-mannose + ATP = D-mannose 6-phosphate + ADP + H(+). The catalysed reaction is D-glucose + ATP = D-glucose 6-phosphate + ADP + H(+). It catalyses the reaction D-glucosamine + ATP = D-glucosamine 6-phosphate + ADP + H(+). The protein operates within carbohydrate metabolism; hexose metabolism. Its pathway is carbohydrate degradation; glycolysis; D-glyceraldehyde 3-phosphate and glycerone phosphate from D-glucose: step 1/4. Functionally, component of the N-acetylglucosamine catabolic cascade that phosphorylates N-acetylglucosamine (GlcNAc), and allows the unique ability to utilise GlcNAc as carbon source. Converts GlcNAc to GlcNAc-6-P. Also able to phosphorylate glucose, glucosamine (GlcN), and mannose. Galactose, fructose, N-acetylmannosamine (ManNAc), mannosamine (ManN), galactosamine (GalN), and N-acetylgalactosamine (GalNAc) are not phosphorylated by HXK1. GlcNAc metabolism is closely associated with virulence and morphogenesis, and is involved in the cell wall synthesis. Acts both as a repressor and an activator of genes involved in maintaining cellular homeostasis. Contributes to white-opaque morphological transition and plays a role as a filamentation repressor. This Candida albicans (strain SC5314 / ATCC MYA-2876) (Yeast) protein is N-acetylglucosamine kinase 1.